Consider the following 184-residue polypeptide: Photosystem I assembly protein Ycf4 (184 aa).

Helical transmembrane passes span 22-42 (FCWA…GTSS) and 57-77 (ILFF…LFIS).

It belongs to the Ycf4 family.

It is found in the plastid. The protein resides in the chloroplast thylakoid membrane. Seems to be required for the assembly of the photosystem I complex. The chain is Photosystem I assembly protein Ycf4 from Chloranthus spicatus (Chulantree).